Here is a 451-residue protein sequence, read N- to C-terminus: Phosphoglucosamine mutase (451 aa).

Ser-101 acts as the Phosphoserine intermediate in catalysis. 4 residues coordinate Mg(2+): Ser-101, Asp-241, Asp-243, and Asp-245. Ser-101 bears the Phosphoserine mark.

Belongs to the phosphohexose mutase family. Requires Mg(2+) as cofactor. In terms of processing, activated by phosphorylation.

The catalysed reaction is alpha-D-glucosamine 1-phosphate = D-glucosamine 6-phosphate. Its function is as follows. Catalyzes the conversion of glucosamine-6-phosphate to glucosamine-1-phosphate. This Exiguobacterium sibiricum (strain DSM 17290 / CCUG 55495 / CIP 109462 / JCM 13490 / 255-15) protein is Phosphoglucosamine mutase.